Consider the following 553-residue polypeptide: MLLLLVSVVAALALAAPAPRTQKKRMQVNQAPNVVLVASDSFDGRLTFQPGSQVVKLPFINFMRAHGTTFLNAYTNSPICCPSRAAMWSGLFTHLTESWNNFKGLDPNYTTWMDIMEKHGYQTQKFGKVDYTSGHHSISNRVEAWTRDVAFLLRQEGRPIINLIPDKNRRRVMTKDWQNTDKAIEWLRQVNYTKPFVLYLGLNLPHPYPSPSSGENFGSSTFHTSLYWLEKVAYDAIKIPKWLTLSQMHPVDFYSSYTKNCTGKFTENEIKNIRAFYYAMCAETDAMLGEIILALHKLDLLQKTIVIYTSDHGEMAMEHRQFYKMSMYEASVHVPLLMMGPGIKANLQVPSVVSLVDIYPTMLDIAGIALPPNLSGYSLLTLLSNASANEQAFKFHRPPWILSEFHGCNANASTYMLRTGQWKYIAYADGASVQPQLFDLSLDPDELTNIATEFPEITYSLDQKLRSIVNYPKVSASVHQYNKEQFIMWKQSVGQNYSNVIAHLRWHQDWQRDPRKYENAIQHWLTAHSSPLASSPTQSTSGSQPTLPQSTSG.

A signal peptide spans 1–16; that stretch reads MLLLLVSVVAALALAA. Positions 40 and 80 each coordinate Ca(2+). The active-site Nucleophile is the Cys-80. Cys-80 carries the post-translational modification 3-oxoalanine (Cys). N-linked (GlcNAc...) asparagine glycosylation occurs at Asn-108. Position 128 (Lys-128) interacts with substrate. A glycan (N-linked (GlcNAc...) asparagine) is linked at Asn-191. A substrate-binding site is contributed by His-249. A glycan (N-linked (GlcNAc...) asparagine) is linked at Asn-260. Asp-311 and His-312 together coordinate Ca(2+). N-linked (GlcNAc...) asparagine glycosylation is found at Asn-373, Asn-411, and Asn-496. A disordered region spans residues 530 to 553; it reads SPLASSPTQSTSGSQPTLPQSTSG. A compositionally biased stretch (low complexity) spans 534–553; the sequence is SSPTQSTSGSQPTLPQSTSG.

It belongs to the sulfatase family. Ca(2+) serves as cofactor. In terms of processing, the conversion to 3-oxoalanine (also known as C-formylglycine, FGly), of a serine or cysteine residue in prokaryotes and of a cysteine residue in eukaryotes, is critical for catalytic activity. Post-translationally, the 75-kDa precursor undergoes proteolytic processing to yield a 23 kDa form. N-glycosylated with both high mannose and complex type sugars.

It localises to the secreted. The protein resides in the lysosome. It catalyses the reaction an aryl sulfate + H2O = a phenol + sulfate + H(+). It carries out the reaction Hydrolysis of the 2-sulfate groups of the 2-O-sulfo-D-glucuronate residues of chondroitin sulfate, heparin and heparitin sulfate.. Its function is as follows. Catalyzes the hydrolysis of pseudosubstrates such as p-nitrocatechol sulfate and p-nitrophenyl sulfate. Catalyzes the hydrolysis of the 2-sulfate groups of the 2-O-sulfo-D-glucuronate residues of chondroitin sulfate, heparin and heparitin sulfate. Acts selectively on 2-sulfoglucuronate and lacks activity against 2-sulfoiduronate. This chain is Arylsulfatase K (Arsk), found in Mus musculus (Mouse).